A 54-amino-acid polypeptide reads, in one-letter code: Phorbol-12-myristate-13-acetate-induced protein 1 (54 aa).

The short motif at 29-37 (LRRFGDKLN) is the BH3 element. Residues 41 to 50 (KLLNLISKLF) form a required for mitochondrial location region.

It belongs to the PMAIP1 family. As to quaternary structure, interacts with MCL1. Interacts with BCL2A1. Interacts with BAX. Interacts with BCL2L10. Highly expressed in adult T-cell leukemia cell line.

Its subcellular location is the mitochondrion. In terms of biological role, promotes activation of caspases and apoptosis. Promotes mitochondrial membrane changes and efflux of apoptogenic proteins from the mitochondria. Contributes to p53/TP53-dependent apoptosis after radiation exposure. Promotes proteasomal degradation of MCL1. Competes with BAK1 for binding to MCL1 and can displace BAK1 from its binding site on MCL1. Competes with BIM/BCL2L11 for binding to MCL1 and can displace BIM/BCL2L11 from its binding site on MCL1. The sequence is that of Phorbol-12-myristate-13-acetate-induced protein 1 (PMAIP1) from Homo sapiens (Human).